An 868-amino-acid polypeptide reads, in one-letter code: Monofunctional pimaradiene synthase (868 aa).

Mg(2+) contacts are provided by aspartate 620, aspartate 624, asparagine 764, threonine 768, and glutamate 772.

It belongs to the terpene synthase family. Tpsd subfamily. Mg(2+) serves as cofactor.

It carries out the reaction (+)-copalyl diphosphate = (-)-pimara-8(14),15-diene + diphosphate. Its pathway is terpene metabolism; oleoresin biosynthesis. Its function is as follows. Involved in defensive oleoresin formation in conifers in response to insect attack or other injury. Involved in diterpene (C20) olefins biosynthesis. Monofunctional enzyme lacking the DXDD motif in the class II active site relevant for the cyclization of geranylgeranyl diphosphate (GGPP). Requires (+)-copalyl diphosphate ((+)-CPP) as substrate, but no activity with GGPP or ent-CPP. Pimaradiene is the major products of the enzyme. The protein is Monofunctional pimaradiene synthase of Pinus contorta (Shore pine).